The following is a 185-amino-acid chain: MKSASTVVATRILGLDPGLRITGFGVIDKLGNQLRYVASGCIRTRDGELPGRLKTLLDGVREVVAAYTPDQVAVEKVFVNVNPQSTLLLGQARGAVICGAVSCDLPVHEYTALQVKQAVVGYGKAAKEQVQHMVQRLLALDGCPSPDAADALACAICHAHGGQGTAGAFAGRRRAGRILVAPDPG.

Active-site residues include Asp16, Glu75, and Asp147. Mg(2+)-binding residues include Asp16, Glu75, and Asp147.

The protein belongs to the RuvC family. Homodimer which binds Holliday junction (HJ) DNA. The HJ becomes 2-fold symmetrical on binding to RuvC with unstacked arms; it has a different conformation from HJ DNA in complex with RuvA. In the full resolvosome a probable DNA-RuvA(4)-RuvB(12)-RuvC(2) complex forms which resolves the HJ. Requires Mg(2+) as cofactor.

The protein localises to the cytoplasm. It carries out the reaction Endonucleolytic cleavage at a junction such as a reciprocal single-stranded crossover between two homologous DNA duplexes (Holliday junction).. In terms of biological role, the RuvA-RuvB-RuvC complex processes Holliday junction (HJ) DNA during genetic recombination and DNA repair. Endonuclease that resolves HJ intermediates. Cleaves cruciform DNA by making single-stranded nicks across the HJ at symmetrical positions within the homologous arms, yielding a 5'-phosphate and a 3'-hydroxyl group; requires a central core of homology in the junction. The consensus cleavage sequence is 5'-(A/T)TT(C/G)-3'. Cleavage occurs on the 3'-side of the TT dinucleotide at the point of strand exchange. HJ branch migration catalyzed by RuvA-RuvB allows RuvC to scan DNA until it finds its consensus sequence, where it cleaves and resolves the cruciform DNA. The protein is Crossover junction endodeoxyribonuclease RuvC of Aromatoleum aromaticum (strain DSM 19018 / LMG 30748 / EbN1) (Azoarcus sp. (strain EbN1)).